The sequence spans 596 residues: Aspartate--tRNA(Asp/Asn) ligase (596 aa).

E175 lines the L-aspartate pocket. Residues 199–202 are aspartate; sequence QQYK. L-aspartate contacts are provided by R221 and H454. 221-223 provides a ligand contact to ATP; sequence RDE. E488 provides a ligand contact to ATP. Position 495 (R495) interacts with L-aspartate. 540-543 contributes to the ATP binding site; it reads GIDR.

The protein belongs to the class-II aminoacyl-tRNA synthetase family. Type 1 subfamily. Homodimer.

It localises to the cytoplasm. It catalyses the reaction tRNA(Asx) + L-aspartate + ATP = L-aspartyl-tRNA(Asx) + AMP + diphosphate. Functionally, aspartyl-tRNA synthetase with relaxed tRNA specificity since it is able to aspartylate not only its cognate tRNA(Asp) but also tRNA(Asn). Reaction proceeds in two steps: L-aspartate is first activated by ATP to form Asp-AMP and then transferred to the acceptor end of tRNA(Asp/Asn). This is Aspartate--tRNA(Asp/Asn) ligase from Rhizobium johnstonii (strain DSM 114642 / LMG 32736 / 3841) (Rhizobium leguminosarum bv. viciae).